A 369-amino-acid polypeptide reads, in one-letter code: tRNA/tmRNA (uracil-C(5))-methyltransferase (369 aa).

5 residues coordinate S-adenosyl-L-methionine: glutamine 190, tyrosine 218, asparagine 223, glutamate 239, and aspartate 301. Cysteine 326 (nucleophile) is an active-site residue. Residue glutamate 360 is the Proton acceptor of the active site.

Belongs to the class I-like SAM-binding methyltransferase superfamily. RNA M5U methyltransferase family. TrmA subfamily.

The enzyme catalyses uridine(54) in tRNA + S-adenosyl-L-methionine = 5-methyluridine(54) in tRNA + S-adenosyl-L-homocysteine + H(+). The catalysed reaction is uridine(341) in tmRNA + S-adenosyl-L-methionine = 5-methyluridine(341) in tmRNA + S-adenosyl-L-homocysteine + H(+). Its function is as follows. Dual-specificity methyltransferase that catalyzes the formation of 5-methyluridine at position 54 (m5U54) in all tRNAs, and that of position 341 (m5U341) in tmRNA (transfer-mRNA). The chain is tRNA/tmRNA (uracil-C(5))-methyltransferase from Vibrio parahaemolyticus serotype O3:K6 (strain RIMD 2210633).